Consider the following 208-residue polypeptide: Segregation and condensation protein B (208 aa).

It belongs to the ScpB family. In terms of assembly, homodimer. Homodimerization may be required to stabilize the binding of ScpA to the Smc head domains. Component of a cohesin-like complex composed of ScpA, ScpB and the Smc homodimer, in which ScpA and ScpB bind to the head domain of Smc. The presence of the three proteins is required for the association of the complex with DNA.

Its subcellular location is the cytoplasm. Participates in chromosomal partition during cell division. May act via the formation of a condensin-like complex containing Smc and ScpA that pull DNA away from mid-cell into both cell halves. This chain is Segregation and condensation protein B, found in Mycoplasma pneumoniae (strain ATCC 29342 / M129 / Subtype 1) (Mycoplasmoides pneumoniae).